Reading from the N-terminus, the 144-residue chain is Protein cornichon homolog 1 (144 aa).

Over 1-10 (MAFTFAAFCY) the chain is Cytoplasmic. A helical membrane pass occupies residues 11–31 (MLALLLTATLIFFAIWHIIAF). Over 32–56 (DELKTDYKNPIDQCNTLNPLVLPEY) the chain is Lumenal. A helical transmembrane segment spans residues 57-77 (LIHAFFCVMFLCAAEWLTLGL). Residues 78–122 (NMPLLAYHIWRYMSRPVMSGPGLYDPTTIMNADILAYCQKEGWCK) are Cytoplasmic-facing. Residues 123 to 143 (LAFYLLAFFYYLYGMIYVLVS) traverse the membrane as a helical segment. Position 144 (serine 144) is a topological domain, lumenal.

This sequence belongs to the cornichon family. As to quaternary structure, interacts with AREG immature precursor and with immature TGFA, i.e. with a prosegment and lacking full N-glycosylation, but not with the fully N-glycosylated form. In the Golgi apparatus, may form a complex with GORASP55 and transmembrane TGFA.

The protein localises to the endoplasmic reticulum membrane. It localises to the golgi apparatus membrane. Its function is as follows. Involved in the selective transport and maturation of TGF-alpha family proteins. The polypeptide is Protein cornichon homolog 1 (CNIH1) (Pongo abelii (Sumatran orangutan)).